Consider the following 56-residue polypeptide: MAKKSVRELIRLVSSEGTGHFYTTTKNKRNTPEKMEVKKFDPVARKHCIYKEAKIK.

It belongs to the bacterial ribosomal protein bL33 family.

The protein is Large ribosomal subunit protein bL33 of Dichelobacter nodosus (strain VCS1703A).